The following is a 115-amino-acid chain: MGLLICSLLLGLLCCSMAKDTPPKVEVYTREPEEFGKPNSFICHVSGFYPPQINITLLKDGKEIPNTQQTDLAFEANWYYYLTKHVSFTPKEDDEFICRVTHMGKSKDHFLMIGL.

The first 18 residues, 1-18 (MGLLICSLLLGLLCCSMA), serve as a signal peptide directing secretion. Residues 23–114 (PKVEVYTREP…KSKDHFLMIG (92 aa)) form the Ig-like C1-type domain.

This sequence belongs to the beta-2-microglobulin family. In terms of assembly, heterodimer of an alpha chain and a beta chain. Beta-2-microglobulin is the beta-chain of major histocompatibility complex class I molecules.

It is found in the secreted. Functionally, component of the class I major histocompatibility complex (MHC). Involved in the presentation of peptide antigens to the immune system. The polypeptide is Beta-2-microglobulin (b2m) (Paralichthys olivaceus (Bastard halibut)).